The following is a 227-amino-acid chain: Small ribosomal subunit protein uS3 (227 aa).

The 69-residue stretch at 39 to 107 folds into the KH type-2 domain; that stretch reads VREFLDKRLV…PVHINIEEVR (69 aa).

It belongs to the universal ribosomal protein uS3 family. As to quaternary structure, part of the 30S ribosomal subunit. Forms a tight complex with proteins S10 and S14.

Binds the lower part of the 30S subunit head. Binds mRNA in the 70S ribosome, positioning it for translation. In Marinobacter nauticus (strain ATCC 700491 / DSM 11845 / VT8) (Marinobacter aquaeolei), this protein is Small ribosomal subunit protein uS3.